A 380-amino-acid chain; its full sequence is Probable tRNA sulfurtransferase (380 aa).

One can recognise a THUMP domain in the interval 58 to 162; sequence EEVIERLKKV…MAFVYAGVIE (105 aa). ATP contacts are provided by residues 178–179, 203–204, Arg-260, Gly-282, and Gln-291; these read LL and YF.

Belongs to the ThiI family.

It localises to the cytoplasm. It carries out the reaction [ThiI sulfur-carrier protein]-S-sulfanyl-L-cysteine + a uridine in tRNA + 2 reduced [2Fe-2S]-[ferredoxin] + ATP + H(+) = [ThiI sulfur-carrier protein]-L-cysteine + a 4-thiouridine in tRNA + 2 oxidized [2Fe-2S]-[ferredoxin] + AMP + diphosphate. The catalysed reaction is [ThiS sulfur-carrier protein]-C-terminal Gly-Gly-AMP + S-sulfanyl-L-cysteinyl-[cysteine desulfurase] + AH2 = [ThiS sulfur-carrier protein]-C-terminal-Gly-aminoethanethioate + L-cysteinyl-[cysteine desulfurase] + A + AMP + 2 H(+). It functions in the pathway cofactor biosynthesis; thiamine diphosphate biosynthesis. Its function is as follows. Catalyzes the ATP-dependent transfer of a sulfur to tRNA to produce 4-thiouridine in position 8 of tRNAs, which functions as a near-UV photosensor. Also catalyzes the transfer of sulfur to the sulfur carrier protein ThiS, forming ThiS-thiocarboxylate. This is a step in the synthesis of thiazole, in the thiamine biosynthesis pathway. The sulfur is donated as persulfide by IscS. The sequence is that of Probable tRNA sulfurtransferase from Thermoanaerobacter pseudethanolicus (strain ATCC 33223 / 39E) (Clostridium thermohydrosulfuricum).